We begin with the raw amino-acid sequence, 437 residues long: ATP-dependent RNA helicase RhlB (437 aa).

The Q motif motif lies at 9-37 (QKFADLGLEPTVLEGLDAQGFHYCTPIQA). The Helicase ATP-binding domain maps to 40–219 (LPVVLTGQDI…FEHMNSPESV (180 aa)). 53-60 (AQTGTGKT) provides a ligand contact to ATP. The DEAD box motif lies at 165 to 168 (DEAD). The Helicase C-terminal domain occupies 245 to 390 (RLLQTLIEEE…LSKYNSEALL (146 aa)). The tract at residues 395–437 (APLRLQRTPRQGGNRRPNGNRQGQGQSRPRNNNRRHPQSQKQQ) is disordered. Residues 400–424 (QRTPRQGGNRRPNGNRQGQGQSRPR) show a composition bias toward low complexity. A compositionally biased stretch (basic residues) spans 425–437 (NNNRRHPQSQKQQ).

The protein belongs to the DEAD box helicase family. RhlB subfamily. Component of the RNA degradosome, which is a multiprotein complex involved in RNA processing and mRNA degradation.

The protein resides in the cytoplasm. It carries out the reaction ATP + H2O = ADP + phosphate + H(+). DEAD-box RNA helicase involved in RNA degradation. Has RNA-dependent ATPase activity and unwinds double-stranded RNA. The sequence is that of ATP-dependent RNA helicase RhlB from Photobacterium profundum (strain SS9).